The following is a 325-amino-acid chain: Hydroxymethylglutaryl-CoA lyase, mitochondrial (325 aa).

A mitochondrion-targeting transit peptide spans 1 to 27 (MAAMRKALPRRLVGLASLRAVSTSSMG). The 268-residue stretch at 33–300 (VKIVEVGPRD…HTGVNLQKLL (268 aa)) folds into the Pyruvate carboxyltransferase domain. A substrate-binding site is contributed by arginine 41. Aspartate 42 lines the a divalent metal cation pocket. N6-acetyllysine; alternate is present on lysine 48. Lysine 48 carries the post-translational modification N6-succinyllysine; alternate. An N6-acetyllysine modification is found at lysine 111. An N6-acetyllysine; alternate mark is found at lysine 137 and lysine 179. Lysine 137 and lysine 179 each carry N6-succinyllysine; alternate. Residues histidine 233 and histidine 235 each coordinate a divalent metal cation. Cysteine 266 is an active-site residue. Position 275 (asparagine 275) interacts with a divalent metal cation. The short motif at 323-325 (CKL) is the Microbody targeting signal element. Lysine 324 is modified (N6-acetyllysine).

This sequence belongs to the HMG-CoA lyase family. As to quaternary structure, homodimer; disulfide-linked. Can also form homotetramers. It depends on a divalent metal cation as a cofactor. As to expression, highest expression in liver. Expressed in pancreas, kidney, intestine, testis, fibroblasts and lymphoblasts. Very low expression in brain and skeletal muscle. The relative expression of isoform 2 (at mRNA level) is highest in heart (30%), skeletal muscle (22%), and brain (14%).

It localises to the mitochondrion matrix. It is found in the peroxisome. It carries out the reaction (3S)-3-hydroxy-3-methylglutaryl-CoA = acetoacetate + acetyl-CoA. Its pathway is metabolic intermediate metabolism; (S)-3-hydroxy-3-methylglutaryl-CoA degradation; acetoacetate from (S)-3-hydroxy-3-methylglutaryl-CoA: step 1/1. With respect to regulation, stimulated by reducing agents such as dithiothreitol (DTT). In terms of biological role, mitochondrial 3-hydroxy-3-methylglutaryl-CoA lyase that catalyzes a cation-dependent cleavage of (S)-3-hydroxy-3-methylglutaryl-CoA into acetyl-CoA and acetoacetate, a key step in ketogenesis. Terminal step in leucine catabolism. Ketone bodies (beta-hydroxybutyrate, acetoacetate and acetone) are essential as an alternative source of energy to glucose, as lipid precursors and as regulators of metabolism. The polypeptide is Hydroxymethylglutaryl-CoA lyase, mitochondrial (HMGCL) (Homo sapiens (Human)).